The chain runs to 239 residues: Uridylate kinase (239 aa).

Lys12–Gly15 is an ATP binding site. Gly54 contributes to the UMP binding site. ATP contacts are provided by Gly55 and Arg59. UMP contacts are provided by residues Asp74 and Thr135–Thr142. Thr162, Tyr168, and Asp171 together coordinate ATP.

It belongs to the UMP kinase family. In terms of assembly, homohexamer.

Its subcellular location is the cytoplasm. The catalysed reaction is UMP + ATP = UDP + ADP. Its pathway is pyrimidine metabolism; CTP biosynthesis via de novo pathway; UDP from UMP (UMPK route): step 1/1. Its activity is regulated as follows. Inhibited by UTP. Catalyzes the reversible phosphorylation of UMP to UDP. The polypeptide is Uridylate kinase (Fusobacterium nucleatum subsp. nucleatum (strain ATCC 25586 / DSM 15643 / BCRC 10681 / CIP 101130 / JCM 8532 / KCTC 2640 / LMG 13131 / VPI 4355)).